A 443-amino-acid polypeptide reads, in one-letter code: Probable glycine dehydrogenase (decarboxylating) subunit 1 (443 aa).

It belongs to the GcvP family. N-terminal subunit subfamily. The glycine cleavage system is composed of four proteins: P, T, L and H. In this organism, the P 'protein' is a heterodimer of two subunits.

The catalysed reaction is N(6)-[(R)-lipoyl]-L-lysyl-[glycine-cleavage complex H protein] + glycine + H(+) = N(6)-[(R)-S(8)-aminomethyldihydrolipoyl]-L-lysyl-[glycine-cleavage complex H protein] + CO2. The glycine cleavage system catalyzes the degradation of glycine. The P protein binds the alpha-amino group of glycine through its pyridoxal phosphate cofactor; CO(2) is released and the remaining methylamine moiety is then transferred to the lipoamide cofactor of the H protein. The protein is Probable glycine dehydrogenase (decarboxylating) subunit 1 of Desulfovibrio desulfuricans (strain ATCC 27774 / DSM 6949 / MB).